A 533-amino-acid polypeptide reads, in one-letter code: Drimenyl diphosphate synthase (533 aa).

Positions 132, 133, 163, and 165 each coordinate (2E,6E)-farnesyl diphosphate. Position 169 (glutamate 169) interacts with Mg(2+). PFTB repeat units lie at residues 274-316 (VTPM…RRAA), 324-366 (VAEA…AHDP), 372-415 (VDEA…AAHG), 425-466 (AERA…ARGP), and 474-517 (LDRA…FVLL). The Proton donor role is filled by aspartate 303. Arginine 501 provides a ligand contact to (2E,6E)-farnesyl diphosphate.

It belongs to the terpene cyclase/mutase family. The cofactor is Mg(2+). Ni(2+) is required as a cofactor. It depends on Co(2+) as a cofactor.

The enzyme catalyses (2E,6E)-farnesyl diphosphate = (5S,9S,10S)-drim-7-en-11-yl diphosphate. Its function is as follows. Catalyzes the cyclization of farnesyl diphosphate (FPP) to drimenyl diphosphate. Cannot use geranylgeranyl diphosphate (GGPP) as substrate. This chain is Drimenyl diphosphate synthase, found in Streptomyces showdoensis.